Consider the following 144-residue polypeptide: Large ribosomal subunit protein uL16 (144 aa).

Residues Met1–Lys16 show a composition bias toward basic residues. The tract at residues Met1 to Glu20 is disordered.

The protein belongs to the universal ribosomal protein uL16 family. Part of the 50S ribosomal subunit.

In terms of biological role, binds 23S rRNA and is also seen to make contacts with the A and possibly P site tRNAs. The protein is Large ribosomal subunit protein uL16 of Limosilactobacillus fermentum (strain NBRC 3956 / LMG 18251) (Lactobacillus fermentum).